The following is a 62-amino-acid chain: Photosystem II reaction center protein Z (62 aa).

Transmembrane regions (helical) follow at residues 8-28 (AIFA…VVFA) and 41-61 (FSGT…NSLI).

This sequence belongs to the PsbZ family. In terms of assembly, PSII is composed of 1 copy each of membrane proteins PsbA, PsbB, PsbC, PsbD, PsbE, PsbF, PsbH, PsbI, PsbJ, PsbK, PsbL, PsbM, PsbT, PsbY, PsbZ, Psb30/Ycf12, at least 3 peripheral proteins of the oxygen-evolving complex and a large number of cofactors. It forms dimeric complexes.

The protein resides in the plastid. Its subcellular location is the chloroplast thylakoid membrane. Its function is as follows. May control the interaction of photosystem II (PSII) cores with the light-harvesting antenna, regulates electron flow through the 2 photosystem reaction centers. PSII is a light-driven water plastoquinone oxidoreductase, using light energy to abstract electrons from H(2)O, generating a proton gradient subsequently used for ATP formation. The sequence is that of Photosystem II reaction center protein Z from Acorus gramineus (Dwarf sweet flag).